A 351-amino-acid polypeptide reads, in one-letter code: Soluble TNF receptor II (351 aa).

A signal peptide spans 1–19 (MKSVLYSYILFLSCIIING). 2 TNFR-Cys repeats span residues 31–67 (KCKD…NTQC) and 69–110 (PCGS…NRIC). Cystine bridges form between Cys-32-Cys-43, Cys-44-Cys-57, Cys-47-Cys-67, Cys-70-Cys-85, Cys-88-Cys-102, and Cys-92-Cys-110. N-linked (GlcNAc...) asparagine; by host glycans are attached at residues Asn-103, Asn-191, and Asn-250.

It belongs to the orthopoxvirus OPG002 family.

The protein localises to the secreted. Functionally, inhibits host immune defense by binding to host TNF and various chemokines in the extracellular space. Binds host CC chemokines (beta chemokines) and CXC chemokines (alpha chemokines). In Bos taurus (Bovine), this protein is Soluble TNF receptor II (OPG002).